The chain runs to 118 residues: Non-specific lipid-transfer protein-like 1 (118 aa).

Positions Ser5 to Met113 constitute an SCP2 domain.

This Caenorhabditis elegans protein is Non-specific lipid-transfer protein-like 1 (nlt-1).